Consider the following 187-residue polypeptide: MENFHGTTIVSVRRGDQVVIGGDGQVTLGDTVMKGNARKVRRLYNGRVLAGFAGATADAFTLFERFESQLEKHRGNLTKAAVELVKDWRTDRMLRRLEALLAIADDKASLIISGNGDVIEPENGLIAIGSGGPFAQSAARALLENTELGARDIVEKSLIIAADICIYTNRNLTIEELETGRNFPNLA.

T7 is an active-site residue. The Na(+) site is built by A162, C165, and T168.

The protein belongs to the peptidase T1B family. HslV subfamily. A double ring-shaped homohexamer of HslV is capped on each side by a ring-shaped HslU homohexamer. The assembly of the HslU/HslV complex is dependent on binding of ATP.

It localises to the cytoplasm. The enzyme catalyses ATP-dependent cleavage of peptide bonds with broad specificity.. Allosterically activated by HslU binding. In terms of biological role, protease subunit of a proteasome-like degradation complex believed to be a general protein degrading machinery. This is ATP-dependent protease subunit HslV from Methylococcus capsulatus (strain ATCC 33009 / NCIMB 11132 / Bath).